Reading from the N-terminus, the 152-residue chain is Xanthine-guanine phosphoribosyltransferase (152 aa).

Residues 37–38, Arg-69, and 88–96 contribute to the 5-phospho-alpha-D-ribose 1-diphosphate site; these read RG and DDLVDTGGT. GMP is bound at residue Arg-69. Position 89 (Asp-89) interacts with Mg(2+). Asp-92 and Ile-135 together coordinate guanine. Residues Asp-92 and Ile-135 each coordinate xanthine. GMP-binding positions include 92–96 and 134–135; these read DTGGT and WI.

This sequence belongs to the purine/pyrimidine phosphoribosyltransferase family. XGPT subfamily. Homotetramer. Mg(2+) is required as a cofactor.

It is found in the cell inner membrane. The enzyme catalyses GMP + diphosphate = guanine + 5-phospho-alpha-D-ribose 1-diphosphate. The catalysed reaction is XMP + diphosphate = xanthine + 5-phospho-alpha-D-ribose 1-diphosphate. It catalyses the reaction IMP + diphosphate = hypoxanthine + 5-phospho-alpha-D-ribose 1-diphosphate. It functions in the pathway purine metabolism; GMP biosynthesis via salvage pathway; GMP from guanine: step 1/1. The protein operates within purine metabolism; XMP biosynthesis via salvage pathway; XMP from xanthine: step 1/1. Functionally, purine salvage pathway enzyme that catalyzes the transfer of the ribosyl-5-phosphate group from 5-phospho-alpha-D-ribose 1-diphosphate (PRPP) to the N9 position of the 6-oxopurines guanine and xanthine to form the corresponding ribonucleotides GMP (guanosine 5'-monophosphate) and XMP (xanthosine 5'-monophosphate), with the release of PPi. To a lesser extent, also acts on hypoxanthine. This Edwardsiella ictaluri (strain 93-146) protein is Xanthine-guanine phosphoribosyltransferase.